Reading from the N-terminus, the 207-residue chain is Large ribosomal subunit protein uL4 (207 aa).

Residues 53-76 (TVSEVSGTTKKPFKQKGTGNARQG) form a disordered region.

Belongs to the universal ribosomal protein uL4 family. In terms of assembly, part of the 50S ribosomal subunit.

Functionally, one of the primary rRNA binding proteins, this protein initially binds near the 5'-end of the 23S rRNA. It is important during the early stages of 50S assembly. It makes multiple contacts with different domains of the 23S rRNA in the assembled 50S subunit and ribosome. Forms part of the polypeptide exit tunnel. This chain is Large ribosomal subunit protein uL4, found in Rickettsia bellii (strain OSU 85-389).